The following is a 347-amino-acid chain: D-alanine--D-alanine ligase (347 aa).

The 199-residue stretch at 134–332 folds into the ATP-grasp domain; the sequence is KLYAKDLGVK…LAQSLPKTPK (199 aa). 161–216 serves as a coordination point for ATP; the sequence is LIKFNFPFIVKPSNAGSSLGVNVVKEEKELVYALDSAFEYSKEVLIEPFIQGVKEY. Mg(2+)-binding residues include aspartate 288, glutamate 300, and asparagine 302.

Belongs to the D-alanine--D-alanine ligase family. Mg(2+) serves as cofactor. Requires Mn(2+) as cofactor.

Its subcellular location is the cytoplasm. The catalysed reaction is 2 D-alanine + ATP = D-alanyl-D-alanine + ADP + phosphate + H(+). Its pathway is cell wall biogenesis; peptidoglycan biosynthesis. Its function is as follows. Cell wall formation. In Helicobacter pylori (strain P12), this protein is D-alanine--D-alanine ligase.